We begin with the raw amino-acid sequence, 526 residues long: Bifunctional purine biosynthesis protein PurH (526 aa).

The 147-residue stretch at 1–147 (MSSIKRALIS…KNWKHVAIVT (147 aa)) folds into the MGS-like domain.

The protein belongs to the PurH family.

It carries out the reaction (6R)-10-formyltetrahydrofolate + 5-amino-1-(5-phospho-beta-D-ribosyl)imidazole-4-carboxamide = 5-formamido-1-(5-phospho-D-ribosyl)imidazole-4-carboxamide + (6S)-5,6,7,8-tetrahydrofolate. The enzyme catalyses IMP + H2O = 5-formamido-1-(5-phospho-D-ribosyl)imidazole-4-carboxamide. It functions in the pathway purine metabolism; IMP biosynthesis via de novo pathway; 5-formamido-1-(5-phospho-D-ribosyl)imidazole-4-carboxamide from 5-amino-1-(5-phospho-D-ribosyl)imidazole-4-carboxamide (10-formyl THF route): step 1/1. It participates in purine metabolism; IMP biosynthesis via de novo pathway; IMP from 5-formamido-1-(5-phospho-D-ribosyl)imidazole-4-carboxamide: step 1/1. This chain is Bifunctional purine biosynthesis protein PurH, found in Neisseria meningitidis serogroup B (strain ATCC BAA-335 / MC58).